Consider the following 380-residue polypeptide: Cytochrome b (380 aa).

4 helical membrane passes run 33 to 53 (FGSL…FLAM), 77 to 98 (WLIR…YLHI), 113 to 133 (WTIG…GYVL), and 178 to 198 (FFAF…IHLL). 2 residues coordinate heme b: histidine 83 and histidine 97. Heme b-binding residues include histidine 182 and histidine 196. Position 201 (histidine 201) interacts with a ubiquinone. The next 4 helical transmembrane spans lie at 226–246 (YKDL…ALFS), 288–308 (LGGV…PFLH), 320–340 (VTQF…WIGG), and 347–367 (FVII…VLIP).

This sequence belongs to the cytochrome b family. In terms of assembly, the cytochrome bc1 complex contains 3 respiratory subunits (MT-CYB, CYC1 and UQCRFS1), 2 core proteins (UQCRC1 and UQCRC2) and probably 6 low-molecular weight proteins. Heme b serves as cofactor.

The protein resides in the mitochondrion inner membrane. In terms of biological role, component of the ubiquinol-cytochrome c reductase complex (complex III or cytochrome b-c1 complex) that is part of the mitochondrial respiratory chain. The b-c1 complex mediates electron transfer from ubiquinol to cytochrome c. Contributes to the generation of a proton gradient across the mitochondrial membrane that is then used for ATP synthesis. This Kareius bicoloratus (Stone flounder) protein is Cytochrome b (mt-cyb).